Here is a 571-residue protein sequence, read N- to C-terminus: Proline--tRNA ligase (571 aa).

This sequence belongs to the class-II aminoacyl-tRNA synthetase family. ProS type 1 subfamily. In terms of assembly, homodimer.

It localises to the cytoplasm. It catalyses the reaction tRNA(Pro) + L-proline + ATP = L-prolyl-tRNA(Pro) + AMP + diphosphate. Functionally, catalyzes the attachment of proline to tRNA(Pro) in a two-step reaction: proline is first activated by ATP to form Pro-AMP and then transferred to the acceptor end of tRNA(Pro). As ProRS can inadvertently accommodate and process non-cognate amino acids such as alanine and cysteine, to avoid such errors it has two additional distinct editing activities against alanine. One activity is designated as 'pretransfer' editing and involves the tRNA(Pro)-independent hydrolysis of activated Ala-AMP. The other activity is designated 'posttransfer' editing and involves deacylation of mischarged Ala-tRNA(Pro). The misacylated Cys-tRNA(Pro) is not edited by ProRS. The chain is Proline--tRNA ligase from Pseudoalteromonas atlantica (strain T6c / ATCC BAA-1087).